The primary structure comprises 428 residues: Tol-Pal system protein TolB (428 aa).

The signal sequence occupies residues 1 to 24 (MPSLKTLLRGVLVAAMLVAGSARA).

The protein belongs to the TolB family. The Tol-Pal system is composed of five core proteins: the inner membrane proteins TolA, TolQ and TolR, the periplasmic protein TolB and the outer membrane protein Pal. They form a network linking the inner and outer membranes and the peptidoglycan layer.

The protein resides in the periplasm. Its function is as follows. Part of the Tol-Pal system, which plays a role in outer membrane invagination during cell division and is important for maintaining outer membrane integrity. This is Tol-Pal system protein TolB from Chromobacterium violaceum (strain ATCC 12472 / DSM 30191 / JCM 1249 / CCUG 213 / NBRC 12614 / NCIMB 9131 / NCTC 9757 / MK).